A 145-amino-acid chain; its full sequence is Synaptojanin-2-binding protein (145 aa).

Topologically, residues 1–117 (MNGRVDYLVS…VHRGDGEPSG (117 aa)) are cytoplasmic. A PDZ domain is found at 13 to 100 (EINLTRGPSG…AVSLRVQHRL (88 aa)). Residues 118-138 (VPVAVVLLPVFALTLVAVWAF) traverse the membrane as a helical segment. The Mitochondrial intermembrane segment spans residues 139 to 145 (VRYRKQL).

As to quaternary structure, binds (via the PDZ domain) to isoform 2A of SYNJ2 (via the unique motif in the C-terminus). Interacts (via C-terminus) with RALBP1. Interacts (via PDZ domain) with ACVR2A (via C-terminus) and ACVR2B (via C-terminus). Forms a ternary complex with ACVR2A and RALBP1. Interacts with MAPK12. Interacts with DLL1; enhances DLL1 protein stability, and promotes notch signaling in endothelial cells. In terms of tissue distribution, widely expressed.

Its subcellular location is the mitochondrion outer membrane. In terms of biological role, regulates endocytosis of activin type 2 receptor kinases through the Ral/RALBP1-dependent pathway and may be involved in suppression of activin-induced signal transduction. The polypeptide is Synaptojanin-2-binding protein (Synj2bp) (Rattus norvegicus (Rat)).